Reading from the N-terminus, the 488-residue chain is 3-octaprenyl-4-hydroxybenzoate carboxy-lyase (488 aa).

Asparagine 172 contacts Mn(2+). Residues 175–177 (IYR), 189–191 (RWL), and 194–195 (RG) contribute to the prenylated FMN site. Residue glutamate 238 participates in Mn(2+) binding. Aspartate 287 functions as the Proton donor in the catalytic mechanism.

The protein belongs to the UbiD family. As to quaternary structure, homohexamer. The cofactor is prenylated FMN. Mn(2+) serves as cofactor.

The protein resides in the cell membrane. It catalyses the reaction a 4-hydroxy-3-(all-trans-polyprenyl)benzoate + H(+) = a 2-(all-trans-polyprenyl)phenol + CO2. The protein operates within cofactor biosynthesis; ubiquinone biosynthesis. Its function is as follows. Catalyzes the decarboxylation of 3-octaprenyl-4-hydroxy benzoate to 2-octaprenylphenol, an intermediate step in ubiquinone biosynthesis. The polypeptide is 3-octaprenyl-4-hydroxybenzoate carboxy-lyase (Pseudomonas savastanoi pv. phaseolicola (strain 1448A / Race 6) (Pseudomonas syringae pv. phaseolicola (strain 1448A / Race 6))).